Consider the following 280-residue polypeptide: 2-dehydro-3-deoxyphosphooctonate aldolase (280 aa).

This sequence belongs to the KdsA family.

It localises to the cytoplasm. It catalyses the reaction D-arabinose 5-phosphate + phosphoenolpyruvate + H2O = 3-deoxy-alpha-D-manno-2-octulosonate-8-phosphate + phosphate. It functions in the pathway carbohydrate biosynthesis; 3-deoxy-D-manno-octulosonate biosynthesis; 3-deoxy-D-manno-octulosonate from D-ribulose 5-phosphate: step 2/3. It participates in bacterial outer membrane biogenesis; lipopolysaccharide biosynthesis. The polypeptide is 2-dehydro-3-deoxyphosphooctonate aldolase (Thiobacillus denitrificans (strain ATCC 25259 / T1)).